The sequence spans 248 residues: mRNA-decapping protein OPG122 (248 aa).

Residues 45–227 (HKRVSVSAIL…IAKYALDTAK (183 aa)) enclose the Nudix hydrolase domain. The Nudix box signature appears at 125–147 (GGIPKRGENVPECLSREIKEEVN).

It belongs to the Nudix hydrolase family. Interacts with the late transcription elongation factor VLTF-4/OPG110. Interacts with the late transcription factors VLTF-1. The cofactor is Mg(2+). Mn(2+) serves as cofactor.

Its subcellular location is the host mitochondrion. Functionally, acts with RNA polymerase to initiate transcription from late gene promoters. This chain is mRNA-decapping protein OPG122 (OPG122), found in Cynomys gunnisoni (Gunnison's prairie dog).